The primary structure comprises 256 residues: Ribosomal RNA small subunit methyltransferase J (256 aa).

S-adenosyl-L-methionine contacts are provided by residues 101–102, 117–118, 153–154, and D176; these read RD, ER, and SS.

The protein belongs to the methyltransferase superfamily. RsmJ family.

The protein localises to the cytoplasm. It carries out the reaction guanosine(1516) in 16S rRNA + S-adenosyl-L-methionine = N(2)-methylguanosine(1516) in 16S rRNA + S-adenosyl-L-homocysteine + H(+). Functionally, specifically methylates the guanosine in position 1516 of 16S rRNA. In Photobacterium profundum (strain SS9), this protein is Ribosomal RNA small subunit methyltransferase J.